Consider the following 568-residue polypeptide: Zinc finger protein 76 (568 aa).

Lysine 24 is covalently cross-linked (Glycyl lysine isopeptide (Lys-Gly) (interchain with G-Cter in SUMO2)). A run of 3 repeats spans residues 34 to 45, 62 to 73, and 88 to 99. A 3 X 12 AA approximate repeats region spans residues 34–99; sequence IQLEDGTTAY…LEDGSTAYIH (66 aa). 7 C2H2-type zinc fingers span residues 165–189, 195–219, 225–249, 255–279, 285–309, 315–339, and 345–368; these read FRCG…ERAH, YRCD…VRTH, YKCP…VRTH, FRCP…VRTH, YTCP…VRIH, YVCT…HVVH, and YTCS…RSAH. The interval 365-401 is disordered; the sequence is RSAHGELEATEESEQALYEQQQLEAASAAEESPSPKP. A compositionally biased stretch (low complexity) spans 379–396; it reads QALYEQQQLEAASAAEES.

This sequence belongs to the krueppel C2H2-type zinc-finger protein family.

The protein localises to the nucleus. In terms of biological role, may be involved in transcriptional regulation. The chain is Zinc finger protein 76 (Znf76) from Rattus norvegicus (Rat).